Reading from the N-terminus, the 559-residue chain is DnaJ homolog subfamily C member 11 (559 aa).

Residue Ala-2 is modified to N-acetylalanine. The J domain occupies 14-82 (DYYSLLNVRR…QTRAIYDIYG (69 aa)). Ser-204 carries the phosphoserine modification. The stretch at 417–457 (EKELEKQRESAATDVLQKKQEAESAVRLMQESVRRIIEAEE) forms a coiled coil.

The protein belongs to the DNAJC11 family. As to quaternary structure, associates with the mitochondrial contact site and cristae organizing system (MICOS) complex, composed of at least MICOS10/MIC10, CHCHD3/MIC19, CHCHD6/MIC25, APOOL/MIC27, IMMT/MIC60, APOO/MIC23/MIC26 and QIL1/MIC13. This complex was also known under the names MINOS or MitOS complex. The MICOS complex associates with mitochondrial outer membrane proteins SAMM50, MTX1 and MTX2 (together described as components of the mitochondrial outer membrane sorting assembly machinery (SAM) complex) and DNAJC11, mitochondrial inner membrane protein TMEM11 and with HSPA9. The MICOS and SAM complexes together with DNAJC11 are part of a large protein complex spanning both membranes termed the mitochondrial intermembrane space bridging (MIB) complex.

The protein resides in the mitochondrion. It localises to the mitochondrion outer membrane. Required for mitochondrial inner membrane organization. Seems to function through its association with the MICOS complex and the mitochondrial outer membrane sorting assembly machinery (SAM) complex. The polypeptide is DnaJ homolog subfamily C member 11 (DNAJC11) (Pongo abelii (Sumatran orangutan)).